We begin with the raw amino-acid sequence, 977 residues long: Receptor-like protein kinase 7 (977 aa).

The signal sequence occupies residues 1 to 28 (MAPSLRNFNFFHRFSTFLVFSLFSVVSS). Topologically, residues 29-608 (DDLQVLLKLK…NPSRSHGDTR (580 aa)) are extracellular. 3 LRR repeats span residues 71-95 (RGNV…SVCE), 96-119 (IQSL…DLKN), and 121-145 (TSLK…SLNQ). N-linked (GlcNAc...) asparagine glycosylation is found at N73 and N119. N-linked (GlcNAc...) asparagine glycosylation is found at N152 and N167. 17 LRR repeats span residues 168-194 (ATSL…VVSL), 195-218 (KKLS…IGDL), 219-242 (TELR…ISKL), 244-265 (NLWQ…GFGN), 267-289 (KNLT…LRSL), 290-312 (TNLV…EFGE), 313-337 (FKDL…LGSL), 339-361 (DFDF…MCKN), 362-385 (GKMK…YANC), 386-409 (LTLQ…LWGL), 411-433 (KLEI…IKNG), 434-457 (KMLG…IGDT), 458-481 (ESLT…IGKL), 482-505 (KGLS…IGSC), 507-529 (MLSD…LGSL), 530-553 (PTLN…LSSL), and 555-578 (LSLL…SYNG). N204 carries an N-linked (GlcNAc...) asparagine glycan. N252 and N268 each carry an N-linked (GlcNAc...) asparagine glycan. N318 carries N-linked (GlcNAc...) asparagine glycosylation. N-linked (GlcNAc...) asparagine glycosylation is found at N373 and N399. 2 N-linked (GlcNAc...) asparagine glycosylation sites follow: N536 and N577. Residues 609 to 629 (VFVLCIVFGLLILLASLVFFL) traverse the membrane as a helical segment. Residues 630–977 (YLKKTEKKEG…ESDVKVKEIS (348 aa)) lie on the Cytoplasmic side of the membrane. The Protein kinase domain occupies 666-959 (IKEENLIGRG…QMIEDAEPCR (294 aa)). ATP-binding positions include 672–680 (IGRGGCGDV) and K694. Catalysis depends on D805, which acts as the Proton acceptor.

Belongs to the protein kinase superfamily. Ser/Thr protein kinase family. Interacts with PIP1. Expressed in roots, stems and dry seeds. Expressed at junctions between organs, such as the insertion zones of stamens, petals and sepals, the transition zones of floral stem and pedicel, pedicel and silique, and floral stem and cauline leaves.

The protein resides in the membrane. The catalysed reaction is L-seryl-[protein] + ATP = O-phospho-L-seryl-[protein] + ADP + H(+). The enzyme catalyses L-threonyl-[protein] + ATP = O-phospho-L-threonyl-[protein] + ADP + H(+). Plays a role in pattern-triggered immunity (PTI) signaling induced by pathogen-associated molecular patterns (PAMPs). Acts as a receptor for PIP1 defense peptide. PIP1 is an endogenous secreted peptide that acts as elicitor of immune response and positive regulator of defense response. Involved in the control of seed germination speed, in tolerance to oxidative stress and in maintaining seed longevity. This Arabidopsis thaliana (Mouse-ear cress) protein is Receptor-like protein kinase 7.